The following is a 284-amino-acid chain: Proline-rich protein 32 (284 aa).

3 disordered regions span residues 59-80, 97-119, and 143-171; these read RPPF…APRH, EINS…NMSQ, and SGNN…RGPP.

This Mus musculus (Mouse) protein is Proline-rich protein 32 (Prr32).